A 108-amino-acid polypeptide reads, in one-letter code: Thiosulfate sulfurtransferase GlpE (108 aa).

The Rhodanese domain maps to 17–105; sequence QEKEAVLVDI…WQRQFPAEVA (89 aa). Cysteine 65 (cysteine persulfide intermediate) is an active-site residue.

It belongs to the GlpE family.

It is found in the cytoplasm. It catalyses the reaction thiosulfate + hydrogen cyanide = thiocyanate + sulfite + 2 H(+). The catalysed reaction is thiosulfate + [thioredoxin]-dithiol = [thioredoxin]-disulfide + hydrogen sulfide + sulfite + 2 H(+). In terms of biological role, transferase that catalyzes the transfer of sulfur from thiosulfate to thiophilic acceptors such as cyanide or dithiols. May function in a CysM-independent thiosulfate assimilation pathway by catalyzing the conversion of thiosulfate to sulfite, which can then be used for L-cysteine biosynthesis. In Escherichia coli O8 (strain IAI1), this protein is Thiosulfate sulfurtransferase GlpE.